A 204-amino-acid polypeptide reads, in one-letter code: Tic20 family protein Ycf60 (204 aa).

Transmembrane regions (helical) follow at residues 5 to 25, 87 to 107, 133 to 153, and 159 to 179; these read LPSLIIIMLTTFSIILISFII, LMPLVIFYVTHPTLAVIIFFI, ILLFLINSLLGATFRALPIEF, and GLMMCNTLFWFVLSTISYSII.

The protein belongs to the Tic20 family.

The protein resides in the plastid. The protein localises to the chloroplast membrane. The polypeptide is Tic20 family protein Ycf60 (ycf60) (Gracilaria tenuistipitata var. liui (Red alga)).